Here is a 530-residue protein sequence, read N- to C-terminus: TNF receptor-associated factor 6 (530 aa).

The tract at residues 1 to 362 (MSLLNCENSC…EAQQCNGIYI (362 aa)) is interaction with TAX1BP1. Residues 70 to 109 (CPICLMALREAVQTPCGHRFCKACITKSIRDAGHKCPVDN) form an RING-type; degenerate zinc finger. Residue Lys124 forms a Glycyl lysine isopeptide (Lys-Gly) (interchain with G-Cter in SUMO); alternate linkage. Lys124 is covalently cross-linked (Glycyl lysine isopeptide (Lys-Gly) (interchain with G-Cter in ubiquitin); alternate). Residue Lys142 forms a Glycyl lysine isopeptide (Lys-Gly) (interchain with G-Cter in SUMO) linkage. 2 TRAF-type zinc fingers span residues 150–202 (DHQV…EEKE) and 203–259 (IHDQ…NHLA). Residues 302–356 (NYEETVKQLEGRLVRQDHQIRELTAKMETQSMHVSELKRTIRSLEDKVAEMEAQQ) are a coiled coil. Lys327 is covalently cross-linked (Glycyl lysine isopeptide (Lys-Gly) (interchain with G-Cter in ubiquitin)). Residues 358 to 507 (NGIYIWKIGN…DDTLLVRCEV (150 aa)) form the MATH domain. Positions 363–530 (WKIGNFGMHL…FQPRSTDAGV (168 aa)) are interaction with TANK. Residue Lys461 forms a Glycyl lysine isopeptide (Lys-Gly) (interchain with G-Cter in SUMO) linkage.

Belongs to the TNF receptor-associated factor family. A subfamily. As to quaternary structure, homotrimer. Homooligomer. N-terminal region is dimeric while C-terminal region is trimeric; maybe providing a mode of oligomerization. Upon IL1B treatment, forms a complex with PELI1, IRAK1, IRAK4 and MYD88; this complex recruits MAP3K7/TAK1, TAB1 and TAB2 to mediate NF-kappa-B activation. Direct binding of SMAD6 to PELI1 prevents the complex formation and hence negatively regulates IL1R-TLR signaling and eventually NF-kappa-B-mediated gene expression. Binds to TNFRSF5/CD40 and TNFRSF11A/RANK. Associates with NGFR, TNFRSF17, IRAK2, IRAK3, RIPK2, MAP3K1, MAP3K5, MAP3K14, CSK, TRAF, TRAF-interacting protein TRIP and TNF receptor associated protein TDP2. Interacts with IL17R. Interacts with SQSTM1 bridging NTRK1 and NGFR. Forms a ternary complex with SQSTM1 and PRKCZ. Interacts with PELI2 and PELI3. Binds UBE2V1. Interacts with TAX1BP1; this interaction mediates deubiquitination of TRAF6 and inhibition of NF-kappa-B activation. Interacts with ZNF675. Interacts with ARRB1 and ARRB2. Interacts with MAP3K7 and TAB1/MAP3K7IP1; during IL-1 signaling. Interacts with UBE2N. Interacts with TGFBR1, HDAC1 and RANGAP1. Interacts with AKT1, AKT2 and AKT3. Interacts (via TRAF domains) with NUMBL (via C-terminal). Interacts with RBCK1. Interacts with LIMD1 (via LIM domains). Interacts with RSAD2/viperin. Interacts (via C-terminus) with EIF2AK2/PKR (via the kinase catalytic domain). Interacts with ZFAND5. Interacts with IL1RL1. Interacts with TRAFD1. Interacts with AJUBA. Interacts with MAVS/IPS1. Interacts (via TRAF domains) with DYNC2I2 (via WD domains). Interacts with IFIT3 (via N-terminus). Interacts with TICAM2. Interacts with CARD14. Interacts with CD40 and MAP3K8; the interaction is required for ERK activation. Interacts with TICAM1 and this interaction is enhanced in the presence of WDFY1. Interacts with TANK; this interaction increases in response to DNA damage. Interacts with USP10; this interaction increases in response to DNA damage. Interacts with ZC3H12A; this interaction increases in response to DNA damage and is stimulated by TANK. Interacts with WDFY3. Interacts with TRIM13. Interacts with GPS2. Interacts (via C-terminus) with SASH1. Interacts with LRRC19. Interacts with IL17RA and TRAF3IP2. Interacts with TOMM70. Interacts with AMBRA1; interaction is required to mediate 'Lys-63'-linked ubiquitination of ULK1. Interacts with CRBN; this interaction inhibits TLR4-mediated signaling by preventing TRAF6-mediated ubiquitination of ECSIT. In terms of processing, sumoylated on Lys-124, Lys-142 and Lys-461 with SUMO1. Post-translationally, polyubiquitinated on Lys-124 by TRAF3IP2; after cell stimulation with IL17A. Polyubiquitinated; after cell stimulation with IL1B or TGFB. This ligand-induced cell stimulation leads to dimerization/oligomerization of TRAF6 molecules, followed by auto-ubiquitination which involves UBE2N and UBE2V1 and leads to TRAF6 activation. This 'Lys-63' site-specific poly-ubiquitination appears to be associated with the activation of signaling molecules. Endogenous autoubiquitination occurs only for the cytoplasmic form. Deubiquitinated by USP10 in a TANK-dependent manner, leading to the negative regulation of NF-kappa-B signaling upon DNA damage. LRRC19 induces 'Lys-63' ubiquitination. Ubiquitinated at Lys-327 by the SCF(FBXL2) complex, leading to its degradation by the proteasome.

Its subcellular location is the cytoplasm. It localises to the cell cortex. The protein localises to the nucleus. The protein resides in the lipid droplet. The enzyme catalyses S-ubiquitinyl-[E2 ubiquitin-conjugating enzyme]-L-cysteine + [acceptor protein]-L-lysine = [E2 ubiquitin-conjugating enzyme]-L-cysteine + N(6)-ubiquitinyl-[acceptor protein]-L-lysine.. It participates in protein modification; protein ubiquitination. Functionally, E3 ubiquitin ligase that, together with UBE2N and UBE2V1, mediates the synthesis of 'Lys-63'-linked-polyubiquitin chains conjugated to proteins, such as ECSIT, IKBKG, IRAK1, AKT1 and AKT2. Also mediates ubiquitination of free/unanchored polyubiquitin chain that leads to MAP3K7 activation. Leads to the activation of NF-kappa-B and JUN. Seems to also play a role in dendritic cells (DCs) maturation and/or activation. Represses c-Myb-mediated transactivation, in B-lymphocytes. Adapter protein that seems to play a role in signal transduction initiated via TNF receptor, IL-1 receptor and IL-17 receptor. Regulates osteoclast differentiation by mediating the activation of adapter protein complex 1 (AP-1) and NF-kappa-B, in response to RANK-L stimulation. Together with MAP3K8, mediates CD40 signals that activate ERK in B-cells and macrophages, and thus may play a role in the regulation of immunoglobulin production. Acts as a regulator of the JNK and NF-kappa-B signaling pathways by initiating assembly of heterotypic 'Lys-63'-/'Lys-48'-linked branched ubiquitin chains that are then recognized by TAB2: TRAF6 catalyzes initial 'Lys-63'-linked-polyubiquitin chains that are then branched via 'Lys-48'-linked polyubiquitin by HUWE1. 'Lys-63'-/'Lys-48'-linked branched ubiquitin chains protect 'Lys-63'-linkages from CYLD deubiquitination. Also participates in the TCR signaling by ubiquitinating LAT. The sequence is that of TNF receptor-associated factor 6 (Traf6) from Rattus norvegicus (Rat).